The chain runs to 301 residues: Acetylglutamate kinase (301 aa).

Residues 68–69 (GG), Arg-90, and Asn-195 contribute to the substrate site.

The protein belongs to the acetylglutamate kinase family. ArgB subfamily.

The protein resides in the cytoplasm. The enzyme catalyses N-acetyl-L-glutamate + ATP = N-acetyl-L-glutamyl 5-phosphate + ADP. Its pathway is amino-acid biosynthesis; L-arginine biosynthesis; N(2)-acetyl-L-ornithine from L-glutamate: step 2/4. In terms of biological role, catalyzes the ATP-dependent phosphorylation of N-acetyl-L-glutamate. The polypeptide is Acetylglutamate kinase (Pseudomonas aeruginosa (strain LESB58)).